The sequence spans 357 residues: Peptide chain release factor 1 (357 aa).

Q232 carries the N5-methylglutamine modification.

Belongs to the prokaryotic/mitochondrial release factor family. Methylated by PrmC. Methylation increases the termination efficiency of RF1.

The protein resides in the cytoplasm. Its function is as follows. Peptide chain release factor 1 directs the termination of translation in response to the peptide chain termination codons UAG and UAA. The polypeptide is Peptide chain release factor 1 (Nitratidesulfovibrio vulgaris (strain ATCC 29579 / DSM 644 / CCUG 34227 / NCIMB 8303 / VKM B-1760 / Hildenborough) (Desulfovibrio vulgaris)).